The following is a 62-amino-acid chain: UPF0434 protein Fphi_1862 (62 aa).

This sequence belongs to the UPF0434 family.

The polypeptide is UPF0434 protein Fphi_1862 (Francisella philomiragia subsp. philomiragia (strain ATCC 25017 / CCUG 19701 / FSC 153 / O#319-036)).